We begin with the raw amino-acid sequence, 215 residues long: 3-demethoxyubiquinol 3-hydroxylase (215 aa).

The Fe cation site is built by Glu-64, Glu-94, His-97, Glu-146, Glu-178, and His-181.

It belongs to the COQ7 family. The cofactor is Fe cation.

Its subcellular location is the cell membrane. It carries out the reaction a 5-methoxy-2-methyl-3-(all-trans-polyprenyl)benzene-1,4-diol + AH2 + O2 = a 3-demethylubiquinol + A + H2O. It participates in cofactor biosynthesis; ubiquinone biosynthesis. Catalyzes the hydroxylation of 2-nonaprenyl-3-methyl-6-methoxy-1,4-benzoquinol during ubiquinone biosynthesis. The protein is 3-demethoxyubiquinol 3-hydroxylase of Pseudomonas savastanoi pv. phaseolicola (strain 1448A / Race 6) (Pseudomonas syringae pv. phaseolicola (strain 1448A / Race 6)).